Reading from the N-terminus, the 153-residue chain is Glutamyl-tRNA(Gln) amidotransferase subunit C, mitochondrial (153 aa).

The disordered stretch occupies residues His-31 to Pro-55.

It belongs to the GatC family. As to quaternary structure, subunit of the heterotrimeric GatCAB amidotransferase (AdT) complex, composed of A, B and C subunits.

Its subcellular location is the mitochondrion. The catalysed reaction is L-glutamyl-tRNA(Gln) + L-glutamine + ATP + H2O = L-glutaminyl-tRNA(Gln) + L-glutamate + ADP + phosphate + H(+). Its function is as follows. Allows the formation of correctly charged Gln-tRNA(Gln) through the transamidation of misacylated Glu-tRNA(Gln) in the mitochondria. The reaction takes place in the presence of glutamine and ATP through an activated gamma-phospho-Glu-tRNA(Gln). The sequence is that of Glutamyl-tRNA(Gln) amidotransferase subunit C, mitochondrial from Drosophila willistoni (Fruit fly).